Reading from the N-terminus, the 337-residue chain is tRNA N6-adenosine threonylcarbamoyltransferase (337 aa).

Positions 110 and 114 each coordinate Fe cation. Substrate is bound by residues 132 to 136 (VVSGG), D165, G178, D182, and N268. D293 contributes to the Fe cation binding site.

It belongs to the KAE1 / TsaD family. It depends on Fe(2+) as a cofactor.

It localises to the cytoplasm. It carries out the reaction L-threonylcarbamoyladenylate + adenosine(37) in tRNA = N(6)-L-threonylcarbamoyladenosine(37) in tRNA + AMP + H(+). Functionally, required for the formation of a threonylcarbamoyl group on adenosine at position 37 (t(6)A37) in tRNAs that read codons beginning with adenine. Is involved in the transfer of the threonylcarbamoyl moiety of threonylcarbamoyl-AMP (TC-AMP) to the N6 group of A37, together with TsaE and TsaB. TsaD likely plays a direct catalytic role in this reaction. The chain is tRNA N6-adenosine threonylcarbamoyltransferase from Sulfurihydrogenibium sp. (strain YO3AOP1).